The primary structure comprises 1382 residues: Hepatocyte growth factor receptor (1382 aa).

Residues 1–24 (MKAPAVLAPGVLVLLFTLVRKSHG) form the signal peptide. Residues 25–935 (ECEEALAKSK…VQPDQNFTGL (911 aa)) lie on the Extracellular side of the membrane. In terms of domain architecture, Sema spans 27 to 516 (EEALAKSKMN…TGKKITKIPL (490 aa)). N45 carries N-linked (GlcNAc...) asparagine glycosylation. 4 cysteine pairs are disulfide-bonded: C95–C101, C98–C160, C133–C141, and C173–C176. A glycan (N-linked (GlcNAc...) asparagine) is linked at N106. 2 N-linked (GlcNAc...) asparagine glycosylation sites follow: N203 and N359. Disulfide bonds link C299–C364 and C386–C398. 3 N-linked (GlcNAc...) asparagine glycosylation sites follow: N400, N406, and N450. 4 cysteine pairs are disulfide-bonded: C521–C539, C527–C562, C530–C546, and C542–C552. 3 consecutive IPT/TIG domains span residues 564–656 (PTIY…FSYV), 658–740 (PVIT…FSYQ), and 743–837 (PTVY…LIYV). O-linked (Man) threonine glycosylation occurs at T583. 2 N-linked (GlcNAc...) asparagine glycosylation sites follow: N608 and N636. O-linked (Man) threonine glycosylation occurs at T677. Residue N751 is glycosylated (N-linked (GlcNAc...) asparagine). A glycan (O-linked (Man) threonine) is linked at T762. N-linked (GlcNAc...) asparagine glycosylation is found at N786, N880, and N931. Residues 936 to 956 (IVGVVSISIILLLLLGLFLWL) traverse the membrane as a helical segment. Residues 957-1382 (KKRKQIKDLG…QDSVDDEVDT (426 aa)) are Cytoplasmic-facing. A Phosphoserine modification is found at S967. Position 978 is a phosphothreonine (T978). S991, S998, and S1001 each carry phosphoserine. Y1004 carries the post-translational modification Phosphotyrosine. Positions 1079–1346 (VHFNEVIGRG…RISAIFSTFI (268 aa)) constitute a Protein kinase domain. Residues 1085–1093 (IGRGHFGCV) and K1111 contribute to the ATP site. D1205 (proton acceptor) is an active-site residue. The interval 1213-1382 (LDEKFTVKVA…QDSVDDEVDT (170 aa)) is interaction with RANBP9. Y1231 bears the Phosphotyrosine mark. Phosphotyrosine; by autocatalysis occurs at positions 1235 and 1236. T1290 is subject to Phosphothreonine. Residues 1321–1360 (WHPKAEMRPSFSELVSRISAIFSTFIGEHYVHVNTTYVNV) are interaction with MUC20. Y1350 and Y1357 each carry phosphotyrosine; by autocatalysis. A Phosphotyrosine modification is found at Y1366.

This sequence belongs to the protein kinase superfamily. Tyr protein kinase family. As to quaternary structure, heterodimer made of an alpha chain (50 kDa) and a beta chain (145 kDa) which are disulfide linked. Binds PLXNB1. Interacts when phosphorylated with downstream effectors including STAT3, PIK3R1, SRC, PCLG1, GRB2 and GAB1. Interacts with SPSB1, SPSB2 and SPSB4. Interacts with INPP5D/SHIP1. When phosphorylated at Tyr-1357, interacts with INPPL1/SHIP2. Interacts with RANBP9 and RANBP10, as well as SPSB1, SPSB2, SPSB3 and SPSB4. SPSB1 binding occurs in the presence and in the absence of HGF, however HGF treatment has a positive effect on this interaction. Interacts with MUC20; prevents interaction with GRB2 and suppresses hepatocyte growth factor-induced cell proliferation. Interacts with GRB10. Interacts with PTPN1 and PTPN2. Interacts with HSP90AA1 and HSP90AB1; the interaction suppresses MET kinase activity. Interacts with tensin TNS3. Interacts (when phosphorylated) with tensin TNS4 (via SH2 domain); the interaction increases MET protein stability by inhibiting MET endocytosis and subsequent lysosomal degradation. Post-translationally, autophosphorylated in response to ligand binding on Tyr-1235 and Tyr-1236 in the kinase domain leading to further phosphorylation of Tyr-1350 and Tyr-1357 in the C-terminal multifunctional docking site. Dephosphorylated by PTPRJ at Tyr-1350 and Tyr-1366. Dephosphorylated by PTPN1 and PTPN2. In terms of processing, ubiquitinated. Ubiquitination by CBL regulates the receptor stability and activity through proteasomal degradation. O-mannosylation of IPT/TIG domains by TMEM260 is required for protein maturation. O-mannosylated residues are composed of single mannose glycans that are not elongated or modified.

It is found in the membrane. It carries out the reaction L-tyrosyl-[protein] + ATP = O-phospho-L-tyrosyl-[protein] + ADP + H(+). Its activity is regulated as follows. In its inactive state, the C-terminal tail interacts with the catalytic domain and inhibits the kinase activity. Upon ligand binding, the C-terminal tail is displaced and becomes phosphorylated, thus increasing the kinase activity. Its function is as follows. Receptor tyrosine kinase that transduces signals from the extracellular matrix into the cytoplasm by binding to hepatocyte growth factor/HGF ligand. Regulates many physiological processes including proliferation, scattering, morphogenesis and survival. Ligand binding at the cell surface induces autophosphorylation of MET on its intracellular domain that provides docking sites for downstream signaling molecules. Following activation by ligand, interacts with the PI3-kinase subunit PIK3R1, PLCG1, SRC, GRB2, STAT3 or the adapter GAB1. Recruitment of these downstream effectors by MET leads to the activation of several signaling cascades including the RAS-ERK, PI3 kinase-AKT, or PLCgamma-PKC. The RAS-ERK activation is associated with the morphogenetic effects while PI3K/AKT coordinates prosurvival effects. During embryonic development, MET signaling plays a role in gastrulation, development and migration of muscles and neuronal precursors, angiogenesis and kidney formation. In adults, participates in wound healing as well as organ regeneration and tissue remodeling. Also promotes differentiation and proliferation of hematopoietic cells. The polypeptide is Hepatocyte growth factor receptor (MET) (Loxodonta africana (African elephant)).